We begin with the raw amino-acid sequence, 113 residues long: T cell receptor alpha variable 13-2 (113 aa).

The N-terminal stretch at 1–21 (MAGIRALFMYLWLQLDWVSRG) is a signal peptide. An Ig-like domain is found at 22 to 113 (ESVGLHLPTL…DSAVYFCAEN (92 aa)). The cysteines at positions 43 and 110 are disulfide-linked. A glycan (N-linked (GlcNAc...) asparagine) is linked at asparagine 87.

In terms of assembly, alpha-beta TR is a heterodimer composed of an alpha and beta chain; disulfide-linked. The alpha-beta TR is associated with the transmembrane signaling CD3 coreceptor proteins to form the TR-CD3 (TcR or TCR). The assembly of alpha-beta TR heterodimers with CD3 occurs in the endoplasmic reticulum where a single alpha-beta TR heterodimer associates with one CD3D-CD3E heterodimer, one CD3G-CD3E heterodimer and one CD247 homodimer forming a stable octameric structure. CD3D-CD3E and CD3G-CD3E heterodimers preferentially associate with TR alpha and TR beta chains, respectively. The association of the CD247 homodimer is the last step of TcR assembly in the endoplasmic reticulum and is required for transport to the cell surface.

Its subcellular location is the cell membrane. In terms of biological role, v region of the variable domain of T cell receptor (TR) alpha chain that participates in the antigen recognition. Alpha-beta T cell receptors are antigen specific receptors which are essential to the immune response and are present on the cell surface of T lymphocytes. Recognize peptide-major histocompatibility (MH) (pMH) complexes that are displayed by antigen presenting cells (APC), a prerequisite for efficient T cell adaptive immunity against pathogens. Binding of alpha-beta TR to pMH complex initiates TR-CD3 clustering on the cell surface and intracellular activation of LCK that phosphorylates the ITAM motifs of CD3G, CD3D, CD3E and CD247 enabling the recruitment of ZAP70. In turn ZAP70 phosphorylates LAT, which recruits numerous signaling molecules to form the LAT signalosome. The LAT signalosome propagates signal branching to three major signaling pathways, the calcium, the mitogen-activated protein kinase (MAPK) kinase and the nuclear factor NF-kappa-B (NF-kB) pathways, leading to the mobilization of transcription factors that are critical for gene expression and essential for T cell growth and differentiation. The T cell repertoire is generated in the thymus, by V-(D)-J rearrangement. This repertoire is then shaped by intrathymic selection events to generate a peripheral T cell pool of self-MH restricted, non-autoaggressive T cells. Post-thymic interaction of alpha-beta TR with the pMH complexes shapes TR structural and functional avidity. This chain is T cell receptor alpha variable 13-2, found in Homo sapiens (Human).